The following is a 335-amino-acid chain: Ketol-acid reductoisomerase (NADP(+)) 2 (335 aa).

Residues 1–180 (MKTYYEQDAN…GCTRAGVIET (180 aa)) form the KARI N-terminal Rossmann domain. NADP(+) is bound by residues 24 to 27 (YGSQ), R47, S51, and 81 to 84 (DEQQ). H106 is an active-site residue. G132 provides a ligand contact to NADP(+). In terms of domain architecture, KARI C-terminal knotted spans 181-326 (TFQEETETDL…EELREMMSWI (146 aa)). D189, E193, E225, and E229 together coordinate Mg(2+). S250 serves as a coordination point for substrate.

This sequence belongs to the ketol-acid reductoisomerase family. The cofactor is Mg(2+).

The enzyme catalyses (2R)-2,3-dihydroxy-3-methylbutanoate + NADP(+) = (2S)-2-acetolactate + NADPH + H(+). It catalyses the reaction (2R,3R)-2,3-dihydroxy-3-methylpentanoate + NADP(+) = (S)-2-ethyl-2-hydroxy-3-oxobutanoate + NADPH + H(+). Its pathway is amino-acid biosynthesis; L-isoleucine biosynthesis; L-isoleucine from 2-oxobutanoate: step 2/4. It functions in the pathway amino-acid biosynthesis; L-valine biosynthesis; L-valine from pyruvate: step 2/4. Functionally, involved in the biosynthesis of branched-chain amino acids (BCAA). Catalyzes an alkyl-migration followed by a ketol-acid reduction of (S)-2-acetolactate (S2AL) to yield (R)-2,3-dihydroxy-isovalerate. In the isomerase reaction, S2AL is rearranged via a Mg-dependent methyl migration to produce 3-hydroxy-3-methyl-2-ketobutyrate (HMKB). In the reductase reaction, this 2-ketoacid undergoes a metal-dependent reduction by NADPH to yield (R)-2,3-dihydroxy-isovalerate. This chain is Ketol-acid reductoisomerase (NADP(+)) 2, found in Bacillus anthracis.